Here is a 332-residue protein sequence, read N- to C-terminus: Ketol-acid reductoisomerase (NADP(+)) (332 aa).

The KARI N-terminal Rossmann domain maps to 1–182 (MATIYRDKDA…GGTRAGVLET (182 aa)). NADP(+) contacts are provided by residues 25–28 (YGNQ), Lys-49, Ser-51, and 83–86 (DELQ). Residue His-108 is part of the active site. An NADP(+)-binding site is contributed by Gly-134. The region spanning 183 to 328 (TFAEETETDL…AELRAMMPWL (146 aa)) is the KARI C-terminal knotted domain. Mg(2+)-binding residues include Asp-191, Glu-195, Glu-227, and Glu-231. Substrate is bound at residue Ser-252.

Belongs to the ketol-acid reductoisomerase family. It depends on Mg(2+) as a cofactor.

It carries out the reaction (2R)-2,3-dihydroxy-3-methylbutanoate + NADP(+) = (2S)-2-acetolactate + NADPH + H(+). The enzyme catalyses (2R,3R)-2,3-dihydroxy-3-methylpentanoate + NADP(+) = (S)-2-ethyl-2-hydroxy-3-oxobutanoate + NADPH + H(+). It participates in amino-acid biosynthesis; L-isoleucine biosynthesis; L-isoleucine from 2-oxobutanoate: step 2/4. Its pathway is amino-acid biosynthesis; L-valine biosynthesis; L-valine from pyruvate: step 2/4. Involved in the biosynthesis of branched-chain amino acids (BCAA). Catalyzes an alkyl-migration followed by a ketol-acid reduction of (S)-2-acetolactate (S2AL) to yield (R)-2,3-dihydroxy-isovalerate. In the isomerase reaction, S2AL is rearranged via a Mg-dependent methyl migration to produce 3-hydroxy-3-methyl-2-ketobutyrate (HMKB). In the reductase reaction, this 2-ketoacid undergoes a metal-dependent reduction by NADPH to yield (R)-2,3-dihydroxy-isovalerate. This Methanothrix thermoacetophila (strain DSM 6194 / JCM 14653 / NBRC 101360 / PT) (Methanosaeta thermophila) protein is Ketol-acid reductoisomerase (NADP(+)).